A 128-amino-acid polypeptide reads, in one-letter code: Fluoride-specific ion channel FluC (128 aa).

Helical transmembrane passes span 6–26, 36–56, 68–88, and 99–119; these read LVAL…GLVL, LPTF…AGLA, VLLF…GLET, and IAAA…WLGF. The Na(+) site is built by Gly-76 and Thr-79.

It belongs to the fluoride channel Fluc/FEX (TC 1.A.43) family.

It is found in the cell inner membrane. The catalysed reaction is fluoride(in) = fluoride(out). Na(+) is not transported, but it plays an essential structural role and its presence is essential for fluoride channel function. Fluoride-specific ion channel. Important for reducing fluoride concentration in the cell, thus reducing its toxicity. This Methylobacillus flagellatus (strain ATCC 51484 / DSM 6875 / VKM B-1610 / KT) protein is Fluoride-specific ion channel FluC.